Reading from the N-terminus, the 939-residue chain is Valine--tRNA ligase (939 aa).

Residues 47–57 (PNVTGILHMGH) carry the 'HIGH' region motif. The 'KMSKS' region signature appears at 563–567 (KLSKS). Lys566 lines the ATP pocket. Residues 873–939 (AEHLAKEHAR…QSILDKIASL (67 aa)) are a coiled coil.

The protein belongs to the class-I aminoacyl-tRNA synthetase family. ValS type 1 subfamily. As to quaternary structure, monomer.

The protein resides in the cytoplasm. The catalysed reaction is tRNA(Val) + L-valine + ATP = L-valyl-tRNA(Val) + AMP + diphosphate. Catalyzes the attachment of valine to tRNA(Val). As ValRS can inadvertently accommodate and process structurally similar amino acids such as threonine, to avoid such errors, it has a 'posttransfer' editing activity that hydrolyzes mischarged Thr-tRNA(Val) in a tRNA-dependent manner. The sequence is that of Valine--tRNA ligase from Chlamydia muridarum (strain MoPn / Nigg).